The following is a 778-amino-acid chain: Melanoma-associated antigen D1 (778 aa).

Disordered regions lie at residues 41 to 60 (PTNQ…PTAN), 78 to 123 (FKVQ…KGPN), and 182 to 333 (KAWN…PAWQ). A Phosphotyrosine modification is found at Tyr-92. Composition is skewed to polar residues over residues 104-118 (PNTQ…QNAT), 185-211 (NDTT…SQAD), 225-240 (TAQT…NLES), 253-263 (NNLNVEENSSG), and 300-319 (LAWQ…TPPA). Tandem repeats lie at residues 296 to 301 (WQTPLA), 302 to 307 (WQNPSG), 308 to 313 (WQNQTA), 332 to 337 (WQNPVA), 338 to 343 (WQNPVI), 344 to 349 (WPNPVI), 350 to 355 (WQNPVI), 356 to 361 (WPNPIV), 362 to 367 (WPGPVV), 368 to 373 (WPNPLA), 374 to 379 (WQNPPG), 380 to 385 (WQTPPG), 386 to 391 (WQTPPG), 392 to 397 (WQGPPD), 398 to 403 (WQGPPD), 404 to 409 (WPLPPD), 410 to 415 (WPLPPD), 416 to 421 (WPLPTD), and 422 to 427 (WPLPPD). A 22 X 6 AA tandem repeats of W-[PQ]-X-P-X-X region spans residues 296–444 (WQTPLAWQNP…IPPDWQNLRP (149 aa)). The interval 376–412 (NPPGWQTPPGWQTPPGWQGPPDWQGPPDWPLPPDWPL) is disordered. Residues 377–397 (PPGWQTPPGWQTPPGWQGPPD) show a composition bias toward low complexity. The span at 398–412 (WQGPPDWPLPPDWPL) shows a compositional bias: pro residues. The stretch at 428-432 (WIPAD) is one 20; approximate repeat. 2 tandem repeats follow at residues 433-438 (WPIPPD) and 439-444 (WQNLRP). Low complexity predominate over residues 440–455 (QNLRPSPNLRPSPNSR). The tract at residues 440–466 (QNLRPSPNLRPSPNSRASQNPGAAQPR) is disordered. One can recognise an MAGE domain in the interval 471–669 (LQERANKLVK…RDWTAQFMEA (199 aa)).

As to quaternary structure, interacts with DLX5, DLX7 and MSX2 and forms homomultimers. Interacts with UNC5A. Interacts with TRIM28 and PJA1. Interacts with NGFR/p75NTR and RORA. Expressed in bone marrow stromal cells from both multiple myeloma patients and healthy donors. Seems to be ubiquitously expressed.

The protein resides in the cytoplasm. It is found in the cell membrane. The protein localises to the nucleus. Its function is as follows. Involved in the apoptotic response after nerve growth factor (NGF) binding in neuronal cells. Inhibits cell cycle progression, and facilitates NGFR-mediated apoptosis. May act as a regulator of the function of DLX family members. May enhance ubiquitin ligase activity of RING-type zinc finger-containing E3 ubiquitin-protein ligases. Proposed to act through recruitment and/or stabilization of the Ubl-conjugating enzyme (E2) at the E3:substrate complex. Plays a role in the circadian rhythm regulation. May act as RORA co-regulator, modulating the expression of core clock genes such as BMAL1 and NFIL3, induced, or NR1D1, repressed. The chain is Melanoma-associated antigen D1 (MAGED1) from Homo sapiens (Human).